The primary structure comprises 317 residues: Adenine deaminase (317 aa).

Zn(2+) contacts are provided by His14, His16, and His194. Glu197 functions as the Proton donor in the catalytic mechanism. Asp275 contacts Zn(2+). Asp276 contributes to the substrate binding site.

Belongs to the metallo-dependent hydrolases superfamily. Adenosine and AMP deaminases family. Adenine deaminase type 2 subfamily. It depends on Zn(2+) as a cofactor.

It carries out the reaction adenine + H2O + H(+) = hypoxanthine + NH4(+). Catalyzes the hydrolytic deamination of adenine to hypoxanthine. Plays an important role in the purine salvage pathway and in nitrogen catabolism. This Pseudomonas savastanoi pv. phaseolicola (strain 1448A / Race 6) (Pseudomonas syringae pv. phaseolicola (strain 1448A / Race 6)) protein is Adenine deaminase.